The sequence spans 179 residues: Large ribosomal subunit protein bL19 (179 aa).

It belongs to the bacterial ribosomal protein bL19 family.

Its function is as follows. This protein is located at the 30S-50S ribosomal subunit interface and may play a role in the structure and function of the aminoacyl-tRNA binding site. In Rhizobium johnstonii (strain DSM 114642 / LMG 32736 / 3841) (Rhizobium leguminosarum bv. viciae), this protein is Large ribosomal subunit protein bL19.